The primary structure comprises 291 residues: 4-diphosphocytidyl-2-C-methyl-D-erythritol kinase (291 aa).

Lysine 8 is an active-site residue. 89 to 99 (PIGSGIGGGSS) is an ATP binding site. Aspartate 131 is a catalytic residue.

The protein belongs to the GHMP kinase family. IspE subfamily.

The catalysed reaction is 4-CDP-2-C-methyl-D-erythritol + ATP = 4-CDP-2-C-methyl-D-erythritol 2-phosphate + ADP + H(+). It participates in isoprenoid biosynthesis; isopentenyl diphosphate biosynthesis via DXP pathway; isopentenyl diphosphate from 1-deoxy-D-xylulose 5-phosphate: step 3/6. Its function is as follows. Catalyzes the phosphorylation of the position 2 hydroxy group of 4-diphosphocytidyl-2C-methyl-D-erythritol. The sequence is that of 4-diphosphocytidyl-2-C-methyl-D-erythritol kinase from Chlamydia abortus (strain DSM 27085 / S26/3) (Chlamydophila abortus).